A 284-amino-acid chain; its full sequence is RNase adapter protein RapZ (284 aa).

Gly-8–Ser-15 contributes to the ATP binding site. Asp-56–Asn-59 contributes to the GTP binding site. The RNA-binding stretch occupies residues Arg-266–Thr-284.

It belongs to the RapZ-like family. RapZ subfamily. Homotrimer.

Its function is as follows. Modulates the synthesis of GlmS, by affecting the processing and stability of the regulatory small RNA GlmZ. When glucosamine-6-phosphate (GlcN6P) concentrations are high in the cell, RapZ binds GlmZ and targets it to cleavage by RNase E. Consequently, GlmZ is inactivated and unable to activate GlmS synthesis. Under low GlcN6P concentrations, RapZ is sequestered and inactivated by an other regulatory small RNA, GlmY, preventing GlmZ degradation and leading to synthesis of GlmS. This chain is RNase adapter protein RapZ, found in Salmonella typhimurium (strain LT2 / SGSC1412 / ATCC 700720).